The sequence spans 316 residues: Ribonuclease Z (316 aa).

Residues His63, His65, Asp67, His68, His143, Asp213, and His271 each coordinate Zn(2+). Residue Asp67 is the Proton acceptor of the active site.

The protein belongs to the RNase Z family. Homodimer. The cofactor is Zn(2+).

It carries out the reaction Endonucleolytic cleavage of RNA, removing extra 3' nucleotides from tRNA precursor, generating 3' termini of tRNAs. A 3'-hydroxy group is left at the tRNA terminus and a 5'-phosphoryl group is left at the trailer molecule.. Zinc phosphodiesterase, which displays some tRNA 3'-processing endonuclease activity. Probably involved in tRNA maturation, by removing a 3'-trailer from precursor tRNA. This is Ribonuclease Z from Bacteroides thetaiotaomicron (strain ATCC 29148 / DSM 2079 / JCM 5827 / CCUG 10774 / NCTC 10582 / VPI-5482 / E50).